Consider the following 64-residue polypeptide: Long neurotoxin MS5 (64 aa).

5 cysteine pairs are disulfide-bonded: Cys3/Cys24, Cys6/Cys11, Cys17/Cys41, Cys45/Cys57, and Cys58/Cys63.

Belongs to the three-finger toxin family. Ancestral subfamily. Expressed by the venom gland.

The protein resides in the secreted. Functionally, produces peripheral paralysis by blocking neuromuscular transmission at the postsynaptic site. Very weak inhibitor of the endogenous nicotinic acetylcholine receptors (nAChR) in the human rhabdomyosarcoma TE 671 cell line. This neurotoxin is lethal to zebrafish by injection at the back of the dorsolateral region, but is not toxic to mice by intraperitoneal injection. In Micrurus surinamensis (Surinam coral snake), this protein is Long neurotoxin MS5.